The chain runs to 447 residues: MTLRSCETFLRRSLRFSTALNLTAFPEHEQLYLRVSSGCSVFRPQTVRKCLFHWTPACTVSQGVFLDRLQKGAAVTDESLCNQPVSVSPDRAQQFSLLMKDPDQPENAKSLKVAIVGSPNAGKSTLTNQLLGRKLFAVSSKVHTTRSRAVGVLTENDTQIVLLDTPGLTTQIKAKRHQLENSLLVDPFKSLKEADLVVVLVDVSDKWTRSKLSYEVLKCLALNPDVPAVLVLNKVDLLKNKALLLDITAQLTEGMVNGKKIRIHGASKPVRKAAAGANSRLKEKKAAGSLEDEADHEDKLKALKSHGGWPHFKDVFMLSSIDHEDVETLKRYLFVAAKPCQWQYHSEVLTDQSPEDVCFNTIREKLLQNLPKEVPYTMTQEIEVWKESEDGVLDISIKLYVQKETHMKMVIGPGGQLITRINQEAGNDLMKIFLCNVRLKISVKLRK.

The N-terminal 18 residues, 1–18 (MTLRSCETFLRRSLRFST), are a transit peptide targeting the mitochondrion. Residues 109 to 340 (KSLKVAIVGS…RYLFVAAKPC (232 aa)) enclose the Era-type G domain. The segment at 117–124 (GSPNAGKS) is G1. Residue 117–124 (GSPNAGKS) participates in GTP binding. The tract at residues 143-147 (HTTRS) is G2. Positions 164-167 (DTPG) are G3. Residues 164 to 168 (DTPGL) and 233 to 236 (NKVD) contribute to the GTP site. Positions 233-236 (NKVD) are G4. Positions 318 to 320 (LSS) are G5. A KH type-2 domain is found at 370-447 (LPKEVPYTMT…RLKISVKLRK (78 aa)).

It belongs to the TRAFAC class TrmE-Era-EngA-EngB-Septin-like GTPase superfamily. Era GTPase family.

The protein localises to the mitochondrion matrix. It is found in the mitochondrion inner membrane. Its function is as follows. Probable GTPase that plays a role in the mitochondrial ribosomal small subunit assembly. Specifically binds the 12S mitochondrial rRNA (12S mt-rRNA) to a 33 nucleotide section delineating the 3' terminal stem-loop region. May act as a chaperone that protects the 12S mt-rRNA on the 28S mitoribosomal subunit during ribosomal small subunit assembly. The protein is GTPase Era, mitochondrial (eral1) of Danio rerio (Zebrafish).